Reading from the N-terminus, the 258-residue chain is Probable enoyl-CoA hydratase (258 aa).

It belongs to the enoyl-CoA hydratase/isomerase family.

It carries out the reaction a (3S)-3-hydroxyacyl-CoA = a (2E)-enoyl-CoA + H2O. It catalyses the reaction a 4-saturated-(3S)-3-hydroxyacyl-CoA = a (3E)-enoyl-CoA + H2O. It functions in the pathway lipid metabolism; fatty acid beta-oxidation. In terms of biological role, involved in the degradation of long-chain fatty acids. This Bacillus subtilis (strain 168) protein is Probable enoyl-CoA hydratase (fadB).